The following is a 151-amino-acid chain: 3-dehydroquinate dehydratase (151 aa).

Y26 acts as the Proton acceptor in catalysis. Substrate is bound by residues N75, H81, and D88. Residue H101 is the Proton donor of the active site. Substrate is bound by residues 102–103 (LS) and R112.

Belongs to the type-II 3-dehydroquinase family. Homododecamer.

The enzyme catalyses 3-dehydroquinate = 3-dehydroshikimate + H2O. It functions in the pathway metabolic intermediate biosynthesis; chorismate biosynthesis; chorismate from D-erythrose 4-phosphate and phosphoenolpyruvate: step 3/7. Catalyzes a trans-dehydration via an enolate intermediate. This chain is 3-dehydroquinate dehydratase, found in Shewanella sediminis (strain HAW-EB3).